The following is a 238-amino-acid chain: Aspartate/glutamate leucyltransferase (238 aa).

The protein belongs to the R-transferase family. Bpt subfamily.

The protein localises to the cytoplasm. It carries out the reaction N-terminal L-glutamyl-[protein] + L-leucyl-tRNA(Leu) = N-terminal L-leucyl-L-glutamyl-[protein] + tRNA(Leu) + H(+). The catalysed reaction is N-terminal L-aspartyl-[protein] + L-leucyl-tRNA(Leu) = N-terminal L-leucyl-L-aspartyl-[protein] + tRNA(Leu) + H(+). Functions in the N-end rule pathway of protein degradation where it conjugates Leu from its aminoacyl-tRNA to the N-termini of proteins containing an N-terminal aspartate or glutamate. The chain is Aspartate/glutamate leucyltransferase from Nitrosococcus oceani (strain ATCC 19707 / BCRC 17464 / JCM 30415 / NCIMB 11848 / C-107).